Reading from the N-terminus, the 645-residue chain is MAFWTVPYRAEAVDTNRDPSMYWEDINSASTDDAHNDFFGQFVDFDADGTVTATTDNDFNTVPASMPGVPESMLLMGDRTVATLESAVSSCVSSADEFDFLSSSSRIGPTASAASHEIDPKDLTLSADELAHPSQQQFDYLGRGSMSEADLSRLESISLHSPQRPQNTTSSDTPSPKPPNTDARKPKKFVEALSSTIRKATNLRRNRKAAAVPRQVSPPQEHLQPLKIPKQRRGRGRAVTQGNLPVSPPLQQQEQATPHFIHGQCDDPFNDTALLPPGGVNLQYYGQVAPDTPVESPGVKNEPNQSHFQVDMAWQHHHHPHHHHQQQQHPPPPPHPHPHPHHHQQQQQQHQHQHQHHHQQQQHHQQQQQQQHQMHWTGTGGEYITSQEAGWWTPNMMSQGPNDFSHHQRSASVHVMGHGQHTGMPYDYGAIADTSTGGLMIHMPQPRGSQSSVVNDLTVNAQTFLPPPPPIPQAIGQKMPGSERSHRPPKAKSSGARHLSCSPVRKQRGPSSSPTPADQSAVPRSRHSSGASVSSLRSSSGRLPASMPGTPCSVRKRRSRDISGSNSATSLGGSDGASGIGFVNFTPNDGSVLMTGVAPSGSSKTKARREKEAQDRRRRLSEAAIKAVAAAGGDVDKLIEQGFAF.

Disordered stretches follow at residues 158 to 187 (SLHSPQRPQNTTSSDTPSPKPPNTDARKPK), 201 to 249 (TNLR…VSPP), 284 to 376 (YYGQ…QMHW), 461 to 578 (AQTF…DGAS), and 596 to 618 (GVAPSGSSKTKARREKEAQDRRR). Over residues 240-249 (TQGNLPVSPP) the composition is skewed to polar residues. 2 stretches are compositionally biased toward basic residues: residues 315-326 (QHHHHPHHHHQQ) and 351-361 (QHQHQHHHQQQ). The segment covering 362–373 (QHHQQQQQQQHQ) has biased composition (low complexity). Positions 509–518 (GPSSSPTPAD) are enriched in polar residues. The segment covering 528–546 (SSGASVSSLRSSSGRLPAS) has biased composition (low complexity). The span at 562–572 (ISGSNSATSLG) shows a compositional bias: polar residues.

The protein belongs to the wetA family.

In terms of biological role, brlA, abaA and wetA are pivotal regulators of conidiophore development and conidium maturation. They act individually and together to regulate their own expression and that of numerous other sporulation-specific genes. BrlA, abaA and wetA act together to positively regulate the expression of the Pks1 gene cluster that mediates the biosynthesis of an anthraquinone derivative pigment that contributes to conidial pigmentation that provides protection from UV radiation, heat and cold stress. The protein is Developmental regulatory protein wetA of Metarhizium robertsii (strain ARSEF 23 / ATCC MYA-3075) (Metarhizium anisopliae (strain ARSEF 23)).